Consider the following 269-residue polypeptide: Ethylene-responsive transcription factor ERN1 (269 aa).

Residues 1 to 15 (MEIQFQQPNLQQHQK) are compositionally biased toward polar residues. Disordered stretches follow at residues 1–36 (MEIQFQQPNLQQHQKAGTKGGKFKGRNRNSNTNKFV) and 128–157 (DVPAPSASTTSTSSNTSNSDKNDHNSLSSG). The segment at residues 34–91 (KFVGVRQRPSGRWVAEIKDTTQKIRMWLGTFETAEEAARAYDEAACLLRGSNTRTNFI) is a DNA-binding region (AP2/ERF). A compositionally biased stretch (low complexity) spans 128 to 146 (DVPAPSASTTSTSSNTSNS).

The protein belongs to the AP2/ERF transcription factor family. ERF subfamily.

It localises to the nucleus. Functionally, transcription factor involved in the symbiotic nodule signaling pathway in response to rhizobial stimulation. Functions as a transcriptional regulator required for root infection by symbiotic rhizobia, infection thread (IT) formation, and nodule development. May coordinate these processes. Functions downstream of the CCAMK-CYCLOPS complex. Probably not involved in arbuscular mycorrhizal (AM) symbiosis. The chain is Ethylene-responsive transcription factor ERN1 from Lotus japonicus (Lotus corniculatus var. japonicus).